The primary structure comprises 172 residues: Centrin-2 (172 aa).

Residues 1-30 form a disordered region; that stretch reads MASNFKKANMASSSQRKRMSPKPELTEEQK. Alanine 2 carries the post-translational modification N-acetylalanine. A required for self-assembly region spans residues 2 to 25; that stretch reads ASNFKKANMASSSQRKRMSPKPEL. Position 20 is a phosphoserine (serine 20). Residue lysine 22 forms a Glycyl lysine isopeptide (Lys-Gly) (interchain with G-Cter in SUMO2) linkage. Threonine 26 is modified (phosphothreonine). EF-hand domains are found at residues 28–63, 64–99, 101–136, and 137–172; these read EQKQ…LGFE, PKKE…KMSE, DTKE…LGEN, and LTDE…TSLY. Residues aspartate 41, aspartate 43, threonine 45, threonine 47, and glutamate 52 each coordinate Ca(2+). Ca(2+) is bound by residues aspartate 150, aspartate 152, aspartate 154, glutamate 156, and glutamate 161.

Belongs to the centrin family. In terms of assembly, monomer. Homooligomer. Interacts with SFI1. Interacts with CCP110. Component of the XPC complex composed of XPC, RAD23B and CETN2. Component of the nuclear pore complex (NPC)-associated TREX-2 complex (transcription and export complex 2), composed of at least GANP, 2 copies of ENY2, PCID2, SEM1/DSS1, and either centrin CETN2 or centrin CETN3. The TREX-2 complex also associates with ALYREF/ALY and with the nucleoporin NUP153. Interacts with USP49. Forms a microtubule-associated complex with POC5, POC1B and FAM161A. Interacts with CCDC15.

Its subcellular location is the cytoplasm. It localises to the cytoskeleton. It is found in the microtubule organizing center. The protein resides in the centrosome. The protein localises to the centriole. Its subcellular location is the nucleus envelope. It localises to the nucleus. It is found in the nuclear pore complex. Functionally, plays a fundamental role in microtubule organizing center structure and function. Required for centriole duplication and correct spindle formation. Has a role in regulating cytokinesis and genome stability via cooperation with CALM1 and CCP110. Involved in global genome nucleotide excision repair (GG-NER) by acting as component of the XPC complex. Cooperatively with RAD23B appears to stabilize XPC. In vitro, stimulates DNA binding of the XPC:RAD23B dimer. In terms of biological role, the XPC complex is proposed to represent the first factor bound at the sites of DNA damage and together with other core recognition factors, XPA, RPA and the TFIIH complex, is part of the pre-incision (or initial recognition) complex. The XPC complex recognizes a wide spectrum of damaged DNA characterized by distortions of the DNA helix such as single-stranded loops, mismatched bubbles or single-stranded overhangs. The orientation of XPC complex binding appears to be crucial for inducing a productive NER. XPC complex is proposed to recognize and to interact with unpaired bases on the undamaged DNA strand which is followed by recruitment of the TFIIH complex and subsequent scanning for lesions in the opposite strand in a 5'-to-3' direction by the NER machinery. Cyclobutane pyrimidine dimers (CPDs) which are formed upon UV-induced DNA damage esacpe detection by the XPC complex due to a low degree of structural perurbation. Instead they are detected by the UV-DDB complex which in turn recruits and cooperates with the XPC complex in the respective DNA repair. Its function is as follows. As a component of the TREX-2 complex, involved in the export of mRNAs to the cytoplasm through the nuclear pores. The polypeptide is Centrin-2 (CETN2) (Homo sapiens (Human)).